We begin with the raw amino-acid sequence, 195 residues long: Porimin (195 aa).

Residues 1 to 23 (MALCARAALLLGVLQVLALLGAA) form the signal peptide. Residues 24–152 (QDPTDAQGSA…PTKGKGSKFD (129 aa)) lie on the Extracellular side of the membrane. Asn36, Asn45, Asn51, Asn59, Asn109, and Asn115 each carry an N-linked (GlcNAc...) asparagine glycan. The disordered stretch occupies residues 99-127 (VTPTASKSTPNASASPNSTHTSASMTTPA). Positions 101–126 (PTASKSTPNASASPNSTHTSASMTTP) are enriched in polar residues. The helical transmembrane segment at 153 to 173 (AGSFVGGIVLTLGVLSILYIG) threads the bilayer. Over 174 to 195 (CKMYYSRRGIRYRSIDEHDAII) the chain is Cytoplasmic. Ser187 carries the phosphoserine modification.

It belongs to the CD164 family.

The protein localises to the membrane. Functionally, implicated in oncotic cell death, characterized by cell swelling, organelle swelling, vacuolization and increased membrane permeability. In Mus musculus (Mouse), this protein is Porimin (Tmem123).